The primary structure comprises 669 residues: DNA ligase (669 aa).

Residues 34–38, 83–84, and E114 each bind NAD(+); these read DAEYD and SL. The N6-AMP-lysine intermediate role is filled by K116. The NAD(+) site is built by R137, E171, K287, and K311. Positions 405, 408, 423, and 428 each coordinate Zn(2+). A BRCT domain is found at 591-669; it reads NVESYFAGKT…EERFLQELNK (79 aa).

The protein belongs to the NAD-dependent DNA ligase family. LigA subfamily. Requires Mg(2+) as cofactor. It depends on Mn(2+) as a cofactor.

It catalyses the reaction NAD(+) + (deoxyribonucleotide)n-3'-hydroxyl + 5'-phospho-(deoxyribonucleotide)m = (deoxyribonucleotide)n+m + AMP + beta-nicotinamide D-nucleotide.. Functionally, DNA ligase that catalyzes the formation of phosphodiester linkages between 5'-phosphoryl and 3'-hydroxyl groups in double-stranded DNA using NAD as a coenzyme and as the energy source for the reaction. It is essential for DNA replication and repair of damaged DNA. The protein is DNA ligase of Bacillus mycoides (strain KBAB4) (Bacillus weihenstephanensis).